Reading from the N-terminus, the 108-residue chain is UPF0145 protein YjfJ (108 aa).

Belongs to the UPF0145 family.

The chain is UPF0145 protein YjfJ (yjfJ) from Lactococcus lactis subsp. lactis (strain IL1403) (Streptococcus lactis).